The following is a 790-amino-acid chain: Histone-lysine N-methyltransferase, H3 lysine-9 specific SUVH6 (790 aa).

Residues Q251–N271 form a disordered region. Over residues G256–S268 the composition is skewed to low complexity. One can recognise a YDG domain in the interval G330 to R482. The Pre-SET domain maps to K551–G613. C553, C554, C555, C559, C567, C569, C595, C599, C601, and C605 together coordinate Zn(2+). The region spanning L616–N760 is the SET domain. S-adenosyl-L-methionine-binding positions include R626–W628, D662, Y664, R714, and N717–H718. Residues C720, C778, C780, and C785 each coordinate Zn(2+). In terms of domain architecture, Post-SET spans K774–Y790.

This sequence belongs to the class V-like SAM-binding methyltransferase superfamily. Histone-lysine methyltransferase family. Suvar3-9 subfamily.

The protein localises to the nucleus. It localises to the chromosome. The protein resides in the centromere. The catalysed reaction is N(6)-methyl-L-lysyl(9)-[histone H3] + S-adenosyl-L-methionine = N(6),N(6)-dimethyl-L-lysyl(9)-[histone H3] + S-adenosyl-L-homocysteine + H(+). It carries out the reaction L-lysyl(9)-[histone H3] + S-adenosyl-L-methionine = N(6)-methyl-L-lysyl(9)-[histone H3] + S-adenosyl-L-homocysteine + H(+). Its function is as follows. Histone methyltransferase. Methylates 'Lys-9' of histone H3. H3 'Lys-9' methylation represents a specific tag for epigenetic transcriptional repression. Seems to act preferentially on dsMRNA. This chain is Histone-lysine N-methyltransferase, H3 lysine-9 specific SUVH6 (SUVH6), found in Arabidopsis thaliana (Mouse-ear cress).